A 247-amino-acid polypeptide reads, in one-letter code: Uridylate kinase (247 aa).

19 to 22 (KISG) contacts ATP. Gly-61 is a UMP binding site. ATP is bound by residues Gly-62 and Arg-66. UMP contacts are provided by residues Asp-81 and 142 to 149 (TGNPFFTT). Residues Thr-169, Gln-170, Tyr-175, and Asp-178 each contribute to the ATP site.

The protein belongs to the UMP kinase family. In terms of assembly, homohexamer.

It localises to the cytoplasm. It catalyses the reaction UMP + ATP = UDP + ADP. It participates in pyrimidine metabolism; CTP biosynthesis via de novo pathway; UDP from UMP (UMPK route): step 1/1. Inhibited by UTP. In terms of biological role, catalyzes the reversible phosphorylation of UMP to UDP. The sequence is that of Uridylate kinase from Wolbachia pipientis wMel.